A 406-amino-acid polypeptide reads, in one-letter code: Tyrosine--tRNA ligase (406 aa).

The 'HIGH' region signature appears at P51 to H60. The 'KMSKS' region signature appears at K236–S240. K239 is a binding site for ATP. Residues I345–V405 enclose the S4 RNA-binding domain.

Belongs to the class-I aminoacyl-tRNA synthetase family. TyrS type 2 subfamily. As to quaternary structure, homodimer.

It localises to the cytoplasm. The catalysed reaction is tRNA(Tyr) + L-tyrosine + ATP = L-tyrosyl-tRNA(Tyr) + AMP + diphosphate + H(+). Functionally, catalyzes the attachment of tyrosine to tRNA(Tyr) in a two-step reaction: tyrosine is first activated by ATP to form Tyr-AMP and then transferred to the acceptor end of tRNA(Tyr). This is Tyrosine--tRNA ligase from Wolinella succinogenes (strain ATCC 29543 / DSM 1740 / CCUG 13145 / JCM 31913 / LMG 7466 / NCTC 11488 / FDC 602W) (Vibrio succinogenes).